The sequence spans 670 residues: DEAD-box ATP-dependent RNA helicase 16 (670 aa).

Over residues 1–10 the composition is skewed to low complexity; it reads MAAAAAASSM. Positions 1-97 are disordered; sequence MAAAAAASSM…EEREVSFDEL (97 aa). Composition is skewed to basic and acidic residues over residues 18-30 and 40-49; these read AATE…HDEA and NDGHTAHAAE. Positions 92–120 match the Q motif motif; that stretch reads VSFDELGLDEQLKRALRKKGLDKATPIQR. Residues 123–306 enclose the Helicase ATP-binding domain; the sequence is IPLILEGKDV…KLLLHNPFIL (184 aa). Residue 136 to 143 coordinates ATP; that stretch reads AKTGSGKT. The DEAD box signature appears at 254-257; the sequence is DEAD. Residues 340 to 523 form the Helicase C-terminal domain; that stretch reads LVLLKLELIQ…PFPLLTKNAV (184 aa). A disordered region spans residues 616–670; it reads DIDKPRRRKRMGFKGGSGRSSDPLKTFSAEGKSRRRGRKERDGEQDRRKRKKVES. Over residues 654–670 the composition is skewed to basic and acidic residues; that stretch reads KERDGEQDRRKRKKVES.

This sequence belongs to the DEAD box helicase family. DDX56/DBP9 subfamily.

It catalyses the reaction ATP + H2O = ADP + phosphate + H(+). This Oryza sativa subsp. japonica (Rice) protein is DEAD-box ATP-dependent RNA helicase 16.